A 95-amino-acid chain; its full sequence is Defensin-like protein 232 (95 aa).

Positions 1–26 are cleaved as a signal peptide; that stretch reads MRCTTLIMVSFVVSCLLLSLVEESEA. 4 disulfide bridges follow: Cys33–Cys94, Cys43–Cys68, Cys51–Cys84, and Cys66–Cys86.

Belongs to the DEFL family. In terms of tissue distribution, flower buds.

The protein resides in the secreted. This Arabidopsis thaliana (Mouse-ear cress) protein is Defensin-like protein 232 (SCRL23).